A 460-amino-acid polypeptide reads, in one-letter code: Muscarinic acetylcholine receptor M1 (460 aa).

Topologically, residues 1 to 22 are extracellular; it reads MNTSVPPAVSPNITVLAPGKGP. 2 N-linked (GlcNAc...) asparagine glycosylation sites follow: Asn2 and Asn12. The chain crosses the membrane as a helical span at residues 23-48; sequence WQVAFIGITTGLLSLATVTGNLLVLI. At 49-62 the chain is on the cytoplasmic side; that stretch reads SFKVNTELKTVNNY. A helical transmembrane segment spans residues 63–84; it reads FLLSLACADLIIGTFSMNLYTT. At 85–95 the chain is on the extracellular side; it reads YLLMGHWALGT. The chain crosses the membrane as a helical span at residues 96-121; that stretch reads LACDLWLALDYVASNASVMNLLLISF. Cys98 and Cys178 are joined by a disulfide. The Cytoplasmic segment spans residues 122-142; sequence DRYFSVTRPLSYRAKRTPRRA. The chain crosses the membrane as a helical span at residues 143-164; sequence ALMIGLAWLVSFVLWAPAILFW. Residues 165–185 are Extracellular-facing; sequence QYLVGERTVLAGQCYIQFLSQ. A helical membrane pass occupies residues 186–209; the sequence is PIITFGTAMAAFYLPVTVMCTLYW. The Cytoplasmic segment spans residues 210 to 366; sequence RIYRETENRA…LVKEKKAART (157 aa). Disordered regions lie at residues 225–257, 274–297, and 310–351; these read LQGS…SPPG, WKEE…EEPG, and EAQA…QLAK. Residue Thr230 is modified to Phosphothreonine. Over residues 238–257 the composition is skewed to low complexity; sequence SSSSERSQPGAEGSPESPPG. Ser254 carries the phosphoserine modification. Over residues 328–343 the composition is skewed to basic residues; it reads RPTKKGRDRGGKGQKP. The chain crosses the membrane as a helical span at residues 367 to 390; that stretch reads LSAILLAFILTWTPYNIMVLVSTF. Over 391–397 the chain is Extracellular; the sequence is CKDCVPE. The helical transmembrane segment at 398–420 threads the bilayer; sequence TLWELGYWLCYVNSTVNPMCYAL. At 421–460 the chain is on the cytoplasmic side; it reads CNKAFRDTFRLLLLCRWDKRRWRKIPKRPGSVHRTPSRQC. Phosphoserine is present on Ser451. Thr455 carries the post-translational modification Phosphothreonine. At Ser457 the chain carries Phosphoserine.

The protein belongs to the G-protein coupled receptor 1 family. Muscarinic acetylcholine receptor subfamily. CHRM1 sub-subfamily. As to quaternary structure, interacts with GPRASP2. Interacts with TMEM147.

It localises to the cell membrane. It is found in the postsynaptic cell membrane. Its function is as follows. The muscarinic acetylcholine receptor mediates various cellular responses, including inhibition of adenylate cyclase, breakdown of phosphoinositides and modulation of potassium channels through the action of G proteins. Primary transducing effect is Pi turnover. In Mus musculus (Mouse), this protein is Muscarinic acetylcholine receptor M1 (Chrm1).